A 213-amino-acid polypeptide reads, in one-letter code: Uridine kinase (213 aa).

14–21 provides a ligand contact to ATP; it reads GASASGKS.

This sequence belongs to the uridine kinase family.

It is found in the cytoplasm. It catalyses the reaction uridine + ATP = UMP + ADP + H(+). The enzyme catalyses cytidine + ATP = CMP + ADP + H(+). Its pathway is pyrimidine metabolism; CTP biosynthesis via salvage pathway; CTP from cytidine: step 1/3. The protein operates within pyrimidine metabolism; UMP biosynthesis via salvage pathway; UMP from uridine: step 1/1. The protein is Uridine kinase of Vibrio atlanticus (strain LGP32) (Vibrio splendidus (strain Mel32)).